The sequence spans 283 residues: Phosphate import ATP-binding protein PstB (283 aa).

The segment covering 1 to 20 (MAQTLAQTKQISQSHTFDVS) has biased composition (polar residues). The segment at 1 to 32 (MAQTLAQTKQISQSHTFDVSQSHHKTPDDTNS) is disordered. The region spanning 37 to 278 (YSTQNLDLWY…PSNKKTEDYI (242 aa)) is the ABC transporter domain. 69–76 (GPSGCGKS) serves as a coordination point for ATP.

The protein belongs to the ABC transporter superfamily. Phosphate importer (TC 3.A.1.7) family. As to quaternary structure, the complex is composed of two ATP-binding proteins (PstB), two transmembrane proteins (PstC and PstA) and a solute-binding protein (PstS).

Its subcellular location is the cell membrane. It carries out the reaction phosphate(out) + ATP + H2O = ADP + 2 phosphate(in) + H(+). Part of the ABC transporter complex PstSACB involved in phosphate import. Responsible for energy coupling to the transport system. This chain is Phosphate import ATP-binding protein PstB, found in Staphylococcus aureus (strain USA300).